The primary structure comprises 583 residues: L-arabonate dehydratase (583 aa).

[4Fe-4S] cluster contacts are provided by Cys-56, Cys-124, and Cys-197.

This sequence belongs to the IlvD/Edd family. As to quaternary structure, homodimer. It depends on [4Fe-4S] cluster as a cofactor.

It carries out the reaction L-arabinonate = 2-dehydro-3-deoxy-L-arabinonate + H2O. Activity is enhanced by Mg(2+), being optimal with a concentration of 1-10 mM Mg(2+). In terms of biological role, catalyzes the dehydration of L-arabonate to L-2-keto-3-deoxyarabonate (L-KDA). Is involved in a degradation pathway of L-arabinose that allows A.brasilense to grow on L-arabinose as a sole carbon source. To a lesser extent, can also use D-xylonate as substrate, but not D-galactonate, D-arabonate, and D-gluconate. In Azospirillum brasilense, this protein is L-arabonate dehydratase (araC).